Reading from the N-terminus, the 365-residue chain is Putative glutamate--cysteine ligase 2-3 (365 aa).

This sequence belongs to the glutamate--cysteine ligase type 2 family. YbdK subfamily.

The enzyme catalyses L-cysteine + L-glutamate + ATP = gamma-L-glutamyl-L-cysteine + ADP + phosphate + H(+). ATP-dependent carboxylate-amine ligase which exhibits weak glutamate--cysteine ligase activity. The polypeptide is Putative glutamate--cysteine ligase 2-3 (Mycolicibacterium smegmatis (strain ATCC 700084 / mc(2)155) (Mycobacterium smegmatis)).